A 513-amino-acid chain; its full sequence is Noroxomaritidine synthase (513 aa).

A helical membrane pass occupies residues 14–34 (HYPEILIAIACFLIFSLLLSA). Cys458 contacts heme.

This sequence belongs to the cytochrome P450 family. Heme is required as a cofactor.

The protein resides in the membrane. It carries out the reaction 4'-O-methylnorbelladine + reduced [NADPH--hemoprotein reductase] + O2 = (10bS,4aR)-noroxomaritidine + oxidized [NADPH--hemoprotein reductase] + 2 H2O + H(+). The catalysed reaction is 4'-O-methylnorbelladine + reduced [NADPH--hemoprotein reductase] + O2 = (10bR,4aS)-noroxomaritidine + oxidized [NADPH--hemoprotein reductase] + 2 H2O + H(+). Its pathway is alkaloid biosynthesis. Its function is as follows. Cytochrome P450 that catalyzes an intramolecular para-para' C-C phenol coupling of 4'-O-methylnorbelladine in alkaloids biosynthesis, including haemanthamine- and crinamine-type alkaloids, promising anticancer agents. Catalyzes the formation of (10bR,4aS)-noroxomaritidine and (10bS,4aR)-noroxomaritidine from 4'-O-methylnorbelladine. Also produces N-demethylnarwedine as a minor product. Involved in the biosynthesis of haemanthamine. Can also use 4'-O-methyl-N-methylnorbelladine, (S)- and (R)-coclaurine as substrates, but not 3'-O-methylnorbelladine, 3',4'-O-dimethylnorbelladine, norbelladine, haemanthamine, (10bS,4aR)- or (10bR,4aS)-noroxomaritidine, isovanillin or tyramine. This Narcissus aff. pseudonarcissus MK-2014 (Daffodil) protein is Noroxomaritidine synthase.